Here is a 263-residue protein sequence, read N- to C-terminus: MKPTTISLLQKCKQEKKRFATITAYDYSFAKLFADEGINVMLVGDSLGMTIQGHDSTLPVTVEDIAYHTRAVRRGAPNCLLLSDLPFMAYATPEQACENAAIVMRAGANMVKIEGGAWLVDTVKMLTERAVPVCGHLGLTPQSVNIFGGYKIQGRGDAGQMLLDDALALEAAGAQLLVLECVPVELAKRVTEALSIPVIGIGAGNVTDGQILVMHDAFGITGGHIPKFAKNFLAEAGDMRAAVRQYMAEVESGVYPGEEHSFH.

Mg(2+)-binding residues include aspartate 45 and aspartate 84. Residues 45-46, aspartate 84, and lysine 112 each bind 3-methyl-2-oxobutanoate; that span reads DS. Residue glutamate 114 coordinates Mg(2+). Catalysis depends on glutamate 180, which acts as the Proton acceptor.

Belongs to the PanB family. Homodecamer; pentamer of dimers. Mg(2+) serves as cofactor.

The protein resides in the cytoplasm. The catalysed reaction is 3-methyl-2-oxobutanoate + (6R)-5,10-methylene-5,6,7,8-tetrahydrofolate + H2O = 2-dehydropantoate + (6S)-5,6,7,8-tetrahydrofolate. Its pathway is cofactor biosynthesis; (R)-pantothenate biosynthesis; (R)-pantoate from 3-methyl-2-oxobutanoate: step 1/2. Catalyzes the reversible reaction in which hydroxymethyl group from 5,10-methylenetetrahydrofolate is transferred onto alpha-ketoisovalerate to form ketopantoate. The protein is 3-methyl-2-oxobutanoate hydroxymethyltransferase of Salmonella agona (strain SL483).